Consider the following 478-residue polypeptide: Dynein regulatory complex subunit 4 (478 aa).

The span at 1–12 (MAPKKKGKKGKA) shows a compositional bias: basic residues. A disordered region spans residues 1-33 (MAPKKKGKKGKAKGTPIVDGLAPEDMSKEQVEE). Positions 1–114 (MAPKKKGKKG…LLYEHQNNLT (114 aa)) are regulates microtubule-binding. Positions 115-258 (EMKAEGTVVM…NSLKEQMEDM (144 aa)) are microtubule-binding. Positions 242–427 (LNNLALINSL…KDLQYELAQV (186 aa)) form a coiled coil. Residues 357–478 (QQKTGFKNLV…GPAGLVGTPT (122 aa)) form an interaction with SMO region.

Belongs to the DRC4 family. In terms of assembly, component of the nexin-dynein regulatory complex (N-DRC). Interacts with microtubules. Interacts with SMO. Interacts (via coiled-coil domains) with RAB3B (in GTP-bound form). Interacts with DRC1. Interacts with DRC7. In terms of tissue distribution, expressed in respiratory epithelial cells (at protein level). Expressed in the heart, skeletal muscle, pancreas, liver, brain, trachea and lung. Weakly or not expressed in placenta and kidney.

The protein localises to the cytoplasm. It is found in the cytoskeleton. The protein resides in the cell projection. Its subcellular location is the cilium. It localises to the flagellum. The protein localises to the cilium axoneme. It is found in the cilium basal body. The protein resides in the golgi apparatus. Its subcellular location is the flagellum axoneme. In terms of biological role, component of the nexin-dynein regulatory complex (N-DRC), a key regulator of ciliary/flagellar motility which maintains the alignment and integrity of the distal axoneme and regulates microtubule sliding in motile axonemes. Plays an important role in the assembly of the N-DRC linker. Plays dual roles at both the primary (or non-motile) cilia to regulate hedgehog signaling and in motile cilia to coordinate cilia movement. Required for proper motile cilia functioning. Positively regulates ciliary smoothened (SMO)-dependent Hedgehog (Hh) signaling pathway by facilitating the trafficking of SMO into the cilium and the stimulation of SMO activity in a GRK2-dependent manner. The polypeptide is Dynein regulatory complex subunit 4 (GAS8) (Homo sapiens (Human)).